The chain runs to 414 residues: Gamma-glutamyl phosphate reductase (414 aa).

The protein belongs to the gamma-glutamyl phosphate reductase family.

The protein localises to the cytoplasm. It catalyses the reaction L-glutamate 5-semialdehyde + phosphate + NADP(+) = L-glutamyl 5-phosphate + NADPH + H(+). The protein operates within amino-acid biosynthesis; L-proline biosynthesis; L-glutamate 5-semialdehyde from L-glutamate: step 2/2. Functionally, catalyzes the NADPH-dependent reduction of L-glutamate 5-phosphate into L-glutamate 5-semialdehyde and phosphate. The product spontaneously undergoes cyclization to form 1-pyrroline-5-carboxylate. This chain is Gamma-glutamyl phosphate reductase, found in Bacillus anthracis (strain A0248).